Here is a 109-residue protein sequence, read N- to C-terminus: Membrane-bound lysozyme inhibitor of C-type lysozyme (109 aa).

The signal sequence occupies residues 1 to 17 (MTMKKLLIIILPVLLSG). C18 is lipidated: N-palmitoyl cysteine. The S-diacylglycerol cysteine moiety is linked to residue C18. Cysteines 37 and 102 form a disulfide.

This sequence belongs to the MliC family. Type 1 subfamily. Monomer.

Its subcellular location is the cell outer membrane. Functionally, specifically inhibits C-type lysozymes. This Escherichia coli (strain K12) protein is Membrane-bound lysozyme inhibitor of C-type lysozyme.